The sequence spans 1761 residues: Laminin subunit beta-4 (1761 aa).

An N-terminal signal peptide occupies residues 1–19 (MQFQLTLFLHLGWLSYSKA). Residues 24-264 (NRGACHPTTG…ALYEMIVRGS (241 aa)) form the Laminin N-terminal domain. Residues Asn-169, Asn-229, and Asn-246 are each glycosylated (N-linked (GlcNAc...) asparagine). 19 disulfide bridges follow: Cys-265/Cys-274, Cys-267/Cys-295, Cys-297/Cys-306, Cys-309/Cys-329, Cys-332/Cys-341, Cys-334/Cys-359, Cys-362/Cys-371, Cys-374/Cys-392, Cys-395/Cys-408, Cys-397/Cys-423, Cys-425/Cys-434, Cys-437/Cys-452, Cys-455/Cys-468, Cys-457/Cys-475, Cys-477/Cys-486, Cys-489/Cys-503, Cys-506/Cys-518, Cys-508/Cys-525, and Cys-527/Cys-536. Laminin EGF-like domains follow at residues 265-331 (CFCN…ACRS), 332-394 (CSCN…ACIP), 395-454 (CECD…GCQP), and 455-505 (CDCN…GCSP). The Laminin EGF-like 5; truncated domain maps to 506–552 (CDCDIGGAYSNVCSPKNGQCECRPHVTGRSCSEPAPGYFFAPLNFYL). The Laminin IV type B domain maps to 545 to 763 (FAPLNFYLYE…LIISMSAKLH (219 aa)). Disulfide bonds link Cys-769/Cys-781, Cys-771/Cys-788, Cys-790/Cys-799, Cys-802/Cys-814, Cys-817/Cys-829, Cys-819/Cys-836, Cys-838/Cys-847, Cys-850/Cys-860, Cys-863/Cys-872, Cys-865/Cys-879, Cys-882/Cys-891, Cys-894/Cys-908, Cys-913/Cys-938, Cys-940/Cys-949, Cys-952/Cys-967, Cys-970/Cys-984, Cys-972/Cys-991, Cys-994/Cys-1003, Cys-1006/Cys-1019, Cys-1022/Cys-1043, Cys-1024/Cys-1050, Cys-1052/Cys-1061, Cys-1064/Cys-1077, Cys-1080/Cys-1092, Cys-1082/Cys-1099, Cys-1101/Cys-1110, Cys-1113/Cys-1125, Cys-1128/Cys-1140, Cys-1130/Cys-1147, Cys-1149/Cys-1158, and Cys-1161/Cys-1172. 8 consecutive Laminin EGF-like domains span residues 769–816 (CKCH…GCHP), 817–862 (CHCH…SCHP), 863–910 (CPCN…PCRP), 911–969 (CLCP…PCQP), 970–1021 (CACN…TCRR), 1022–1079 (CSCH…GCQS), 1080–1127 (CDCD…RCIP), and 1128–1174 (CDCN…TCLQ). Asn-1016 carries an N-linked (GlcNAc...) asparagine glycan. N-linked (GlcNAc...) asparagine glycosylation is present at Asn-1055. The segment at 1175–1375 (CHLCFDQWDH…PDIQILNEKV (201 aa)) is domain II. N-linked (GlcNAc...) asparagine glycosylation is found at Asn-1223, Asn-1301, Asn-1326, Asn-1333, and Asn-1354. The stretch at 1243 to 1301 (KVKDYHDSVRRQIMQLNEQLKAVYEFQDLKDTIERAKNEADLLLEDLQEEIDLQSSVLN) forms a coiled coil. Residues 1376 to 1408 (CGDPGNVPCVPLPCGGALCTGRKGHRKCRGPGC) form a domain alpha region. Positions 1409–1761 (HGSLTLSTNA…QEKKYARCYS (353 aa)) are domain I. Positions 1416–1480 (TNALQKAQEA…SDSEEENINL (65 aa)) form a coiled coil. Asn-1469, Asn-1517, Asn-1587, Asn-1596, Asn-1609, and Asn-1725 each carry an N-linked (GlcNAc...) asparagine glycan. A coiled-coil region spans residues 1525–1759 (IQKHMQLCED…VEQEKKYARC (235 aa)).

Laminin is a complex glycoprotein, consisting of three different polypeptide chains (alpha, beta, gamma), which are bound to each other by disulfide bonds into a cross-shaped molecule comprising one long and three short arms with globules at each end.

The protein localises to the secreted. Its subcellular location is the extracellular space. It is found in the extracellular matrix. It localises to the basement membrane. Binding to cells via a high affinity receptor, laminin is thought to mediate the attachment, migration and organization of cells into tissues during embryonic development by interacting with other extracellular matrix components. The protein is Laminin subunit beta-4 (LAMB4) of Homo sapiens (Human).